Here is a 545-residue protein sequence, read N- to C-terminus: Lysine--tRNA ligase (545 aa).

The 'HIGH' region motif lies at 42 to 50 (PSGVPHIGH). The 'KMSKS' region signature appears at 307 to 311 (PLSSS).

The protein belongs to the class-I aminoacyl-tRNA synthetase family.

It is found in the cytoplasm. The enzyme catalyses tRNA(Lys) + L-lysine + ATP = L-lysyl-tRNA(Lys) + AMP + diphosphate. The protein is Lysine--tRNA ligase of Haloarcula marismortui (strain ATCC 43049 / DSM 3752 / JCM 8966 / VKM B-1809) (Halobacterium marismortui).